The sequence spans 246 residues: 14-3-3 protein beta/alpha (246 aa).

Residue M1 is modified to N-acetylmethionine. T2 carries the post-translational modification N-acetylthreonine; in 14-3-3 protein beta/alpha, N-terminally processed. T2 carries the phosphothreonine modification. K5 carries the N6-acetyllysine modification. An N6-acetyllysine; alternate modification is found at K51. K51 participates in a covalent cross-link: Glycyl lysine isopeptide (Lys-Gly) (interchain with G-Cter in SUMO2); alternate. S60 carries the post-translational modification Phosphoserine. N6-acetyllysine is present on K70. Y84 and Y106 each carry 3'-nitrotyrosine. K117 carries the post-translational modification N6-acetyllysine. Phosphoserine is present on residues S186 and S232.

The protein belongs to the 14-3-3 family. In terms of assembly, homodimer. Interacts with SAMSN1 and PRKCE. Interacts with AKAP13. Interacts with SSH1 and TORC2/CRTC2. Interacts with ABL1; the interaction results in cytoplasmic location of ABL1 and inhibition of cABL-mediated apoptosis. Interacts with ROR2 (dimer); the interaction results in phosphorylation of YWHAB on tyrosine residues. Interacts with GAB2. Interacts with YAP1 (phosphorylated form). Interacts with the phosphorylated (by AKT1) form of SRPK2. Interacts with PKA-phosphorylated AANAT. Interacts with MYO1C. Interacts with SIRT2. Interacts with the 'Thr-369' phosphorylated form of DAPK2. Interacts with PI4KB, TBC1D22A and TBC1D22B. Interacts with the 'Ser-1134' and 'Ser-1161' phosphorylated form of SOS1. Interacts (via phosphorylated form) with YWHAB; this interaction occurs in a protein kinase AKT1-dependent manner. Interacts with SLITRK1. Interacts with SYNPO2 (phosphorylated form); YWHAB competes with ACTN2 for interaction with SYNPO2. Interacts with RIPOR2 (via phosphorylated form); this interaction occurs in a chemokine-dependent manner and does not compete for binding of RIPOR2 with RHOA nor blocks inhibition of RIPOR2-mediated RHOA activity. Interacts with MARK2 and MARK3. Interacts with TESK1; the interaction is dependent on the phosphorylation of TESK1 'Ser-439' and inhibits TESK1 kinase activity. Interacts with MEFV. Interacts with HDAC4. Interacts with ADAM22 (via C-terminus). In terms of processing, the alpha, brain-specific form differs from the beta form in being phosphorylated. Phosphorylated on Ser-60 by protein kinase C delta type catalytic subunit in a sphingosine-dependent fashion. Post-translationally, isoform Short contains a N-acetylmethionine at position 1.

The protein localises to the cytoplasm. It localises to the melanosome. Functionally, adapter protein implicated in the regulation of a large spectrum of both general and specialized signaling pathways. Binds to a large number of partners, usually by recognition of a phosphoserine or phosphothreonine motif. Binding generally results in the modulation of the activity of the binding partner. Negative regulator of osteogenesis. Blocks the nuclear translocation of the phosphorylated form (by AKT1) of SRPK2 and antagonizes its stimulatory effect on cyclin D1 expression resulting in blockage of neuronal apoptosis elicited by SRPK2. Negative regulator of signaling cascades that mediate activation of MAP kinases via AKAP13. The chain is 14-3-3 protein beta/alpha (Ywhab) from Rattus norvegicus (Rat).